Reading from the N-terminus, the 367-residue chain is Probable protein phosphatase 2C 67 (367 aa).

Positions 1 to 79 (MAHQKREATS…DEKAATNSNV (79 aa)) are disordered. The span at 31-46 (AEKEHILTSDASHETN) shows a compositional bias: basic and acidic residues. One can recognise a PPM-type phosphatase domain in the interval 91 to 365 (EADAAEDKGC…DNCTAVLIVF (275 aa)). 4 residues coordinate Mn(2+): Asp-131, Gly-132, Asp-312, and Asp-356.

The protein belongs to the PP2C family. Requires Mg(2+) as cofactor. Mn(2+) is required as a cofactor.

It carries out the reaction O-phospho-L-seryl-[protein] + H2O = L-seryl-[protein] + phosphate. The catalysed reaction is O-phospho-L-threonyl-[protein] + H2O = L-threonyl-[protein] + phosphate. This is Probable protein phosphatase 2C 67 from Oryza sativa subsp. japonica (Rice).